The following is a 201-amino-acid chain: Basic helix-loop-helix transcription factor scleraxis (201 aa).

Disordered stretches follow at residues 1 to 92 (MSFA…NSVN) and 148 to 177 (AFFH…QPKQ). The span at 59–69 (RRAGGGGPGGR) shows a compositional bias: gly residues. Positions 70 to 88 (PGREPRQRHTANARERDRT) are enriched in basic and acidic residues. One can recognise a bHLH domain in the interval 75–127 (RQRHTANARERDRTNSVNTAFTALRTLIPTEPADRKLSKIETLRLASSYISHL). Positions 157-167 (SPPPPPPPPPA) are enriched in pro residues.

Efficient DNA binding requires dimerization with another bHLH protein. Dimerizes and binds the E-box consensus sequence with E12.

The protein resides in the nucleus. Plays an early essential role in mesoderm formation, as well as a later role in formation of somite-derived chondrogenic lineages. This chain is Basic helix-loop-helix transcription factor scleraxis (SCX), found in Homo sapiens (Human).